The primary structure comprises 628 residues: Somatic embryogenesis receptor kinase 2 (628 aa).

The signal sequence occupies residues 1-29 (MGRKKFEAFGFVCLISLLLLFNSLWLASS). Over 30 to 241 (NMEGDALHSL…PTPGGYSATG (212 aa)) the chain is Extracellular. The PSKR1 binding stretch occupies residues 45-85 (DPNNVLQSWDPTLVNPCTWFHVTCNNENSVIRVDLGNADLS). Residues 56–58 (TLV) are CLE44 binding. The cysteines at positions 61 and 68 are disulfide-linked. Leucine-rich repeat receptor-like protein kinase binding regions lie at residues 62 to 81 (TWFH…DLGN) and 100 to 105 (YLELYS). Residue 64-65 (FH) coordinates brassinolide. LRR repeat units follow at residues 95–119 (LKNL…LGNL), 121–143 (NLVS…LGKL), 144–167 (FKLR…LTNI), and 168–192 (MTLQ…SFSL). Asn-107 and Asn-118 each carry an N-linked (GlcNAc...) asparagine glycan. Leucine-rich repeat receptor-like protein kinase binding regions lie at residues 126 to 129 (DLYL) and 148 to 150 (FLR). Residues Asn-153 and Asn-187 are each glycosylated (N-linked (GlcNAc...) asparagine). The segment at 174 to 197 (DLSNNRLSGSVPDNGSFSLFTPIS) is leucine-rich repeat receptor-like protein kinase binding. Cys-205 and Cys-213 are oxidised to a cystine. Residues 242-262 (AIAGGVAAGAALLFAAPALAF) form a helical membrane-spanning segment. At 263-628 (AWWRRRKPQE…LHAMELSGPR (366 aa)) the chain is on the cytoplasmic side. Thr-302 carries the phosphothreonine modification. Residues 305–592 (FSNKNILGRG…GLAEKWDEWQ (288 aa)) form the Protein kinase domain. 311 to 319 (LGRGGFGKV) contributes to the ATP binding site. The residue at position 328 (Thr-328) is a Phosphothreonine. An ATP-binding site is contributed by Lys-333. Ser-386 and Ser-389 each carry phosphoserine. Asp-432 acts as the Proton acceptor in catalysis. Residues Thr-462, Thr-465, Thr-466, and Thr-471 each carry the phosphothreonine modification. At Tyr-479 the chain carries Phosphotyrosine. Position 481 is a phosphoserine (Ser-481). Phosphothreonine is present on Thr-482. Phosphoserine is present on Ser-486. At Thr-562 the chain carries Phosphothreonine. A Phosphoserine modification is found at Ser-604. Thr-616 carries the post-translational modification Phosphothreonine. Residue Ser-625 is modified to Phosphoserine.

Belongs to the protein kinase superfamily. Ser/Thr protein kinase family. In terms of assembly, homo- and heterodimer. Component of the SERK1 signaling complex, composed of KAPP, CDC48A, GRF6 or GRF7, SERK1, SERK2, SERK3/BAK1 and BRI1. Bind to BRI1 in a brassinolide-dependent manner. Heterodimer with PSKR1. Interacts with the EF-Tu receptor EFR and FLS2 in a specific ligand-induced manner. Interacts with ERECTA in a EPF2-induced manner. Interacts with ERL1 in a EPF1-induced manner. Interacts with TMM. In the presence of the signal peptide RGF1, interacts with RGI3/RGFR1 and RGI4/RGFR2/SKM2. Binds to the peptide CLE44 in the presence of TDR. Autophosphorylated. Expressed in flowers, tapetum, developing microspores, all cells of the embryo sac, provascular strands and developing vascular bundles. Low expression in adult vascular tissue.

The protein resides in the cell membrane. The catalysed reaction is L-seryl-[protein] + ATP = O-phospho-L-seryl-[protein] + ADP + H(+). It carries out the reaction L-threonyl-[protein] + ATP = O-phospho-L-threonyl-[protein] + ADP + H(+). Serine/threonine-kinase involved in brassinosteroid-dependent and -independent signaling pathways. Acts redundantly with SERK1 as a control point for sporophytic development controlling male gametophyte production. Serves as coreceptor to small peptide (e.g. RGF1 and CLE44) signaling. Involved in the perception of phytosulfokine and subsequent signal transduction. The protein is Somatic embryogenesis receptor kinase 2 of Arabidopsis thaliana (Mouse-ear cress).